The sequence spans 1052 residues: Protein HelA (1052 aa).

The next 13 membrane-spanning stretches (helical) occupy residues 14–34 (WFVLLFTLVIAILGVYNFQRL), 121–141 (LPPGVETTLGPISTGLGEIFM), 348–368 (GALLVCVILFLFLGNIRAALI), 369–389 (TAMVIPLSMLLTITGMVENQI), 393–413 (LMSLGALDFGLIVDGAVIIVE), 450–470 (SIFGVFIITVVYLPILTLTGV), 483–503 (IIALLASMLFALTFVPAAVAI), 537–557 (VVISAAVALVVVSLGIAFHLG), 878–898 (LQIVVPITLLGIFLLLFISFG), 903–923 (ALLVFTGIPLALTGGVFALWL), 934–954 (VGFIALSGVAVLNGLVMITFI), 979–999 (PVLMTALVASLGFVPMALATG), and 1011–1031 (VVIGGIISSTFLTLLVLPGLY).

Belongs to the resistance-nodulation-cell division (RND) (TC 2.A.6) family.

It is found in the cell inner membrane. Presumed to function with HelC and HelB in efflux of an unidentified substrate. This is Protein HelA (helA) from Legionella pneumophila.